The following is a 141-amino-acid chain: ATP synthase epsilon chain (141 aa).

Belongs to the ATPase epsilon chain family. F-type ATPases have 2 components, CF(1) - the catalytic core - and CF(0) - the membrane proton channel. CF(1) has five subunits: alpha(3), beta(3), gamma(1), delta(1), epsilon(1). CF(0) has three main subunits: a, b and c.

The protein resides in the cell inner membrane. Produces ATP from ADP in the presence of a proton gradient across the membrane. The protein is ATP synthase epsilon chain of Halorhodospira halophila (strain DSM 244 / SL1) (Ectothiorhodospira halophila (strain DSM 244 / SL1)).